Reading from the N-terminus, the 349-residue chain is MAELLAIKWDDNRDKLILLDQTILPNKIEYIEYDTAEGVYDSIKDMIVRGAPAIGVTAAYGLYFAAKVAPEDKFENFFKYLKEKSSYLDSSRPTAVNLSWALKVMESKALENKDKDVKEIKSILREEAKRIHEEDIEICKTIGENLITLLKDGVGILTHCNAGQLATSKYGTATSPMYLAKEKGWNFKVYSDETRPRLQGSTLTALELYEAGIDVTTITDNMAAMVMSQGKIDAVIVGCDRIAANGDTANKIGTMGVSILAKYFGIPMYIAAPTPSIDINTKTGEDIPIEERNPEEVTSRFGVWTAPKGVKVYNPGFDVTPHENITAIVTEKGIVYPPFKENLKKLFEK.

Residues 49–51, arginine 92, and glutamine 199 each bind substrate; that span reads RGA. Aspartate 240 serves as the catalytic Proton donor. 250–251 is a substrate binding site; it reads NK.

It belongs to the EIF-2B alpha/beta/delta subunits family. DrdI subfamily.

It catalyses the reaction 5-deoxy-alpha-D-ribose 1-phosphate = 5-deoxy-D-ribulose 1-phosphate. It participates in carbohydrate degradation. In terms of biological role, catalyzes the isomerization of 5-deoxy-alpha-D-ribose 1-phosphate to 5-deoxy-D-ribulose 1-phosphate, as part of a 5-deoxyribose salvage pathway that recycles this toxic radical SAM enzyme by-product to mainstream metabolites. This Clostridium botulinum (strain ATCC 19397 / Type A) protein is 5-deoxyribose 1-phosphate isomerase.